Consider the following 250-residue polypeptide: Deoxynucleoside kinase (250 aa).

An ATP-binding site is contributed by 27 to 35 (GNIGSGKTT). Residues glutamate 52, tyrosine 70, and glutamine 81 each coordinate substrate. Glutamate 104 (proton acceptor) is an active-site residue. Residues arginine 105 and glutamate 172 each coordinate substrate. Serine 236, serine 241, and serine 243 each carry phosphoserine.

Belongs to the DCK/DGK family. Monomer.

The catalysed reaction is a 2'-deoxyribonucleoside + ATP = a 2'-deoxyribonucleoside 5'-phosphate + ADP + H(+). Subject to feedback inhibition by dTTP. In terms of biological role, deoxyribonucleoside kinase that has a broad specificity phosphorylating thymidine, 2'-deoxyriboadenosine, 2'-deoxyribocytidine and 2'-deoxyriboguanosine. Specificity is higher for pyrimidine nucleosides. Several anti-viral and anti-cancer nucleoside analogs are also efficiently phosphorylated. This Drosophila melanogaster (Fruit fly) protein is Deoxynucleoside kinase (dnk).